Here is a 343-residue protein sequence, read N- to C-terminus: Anthranilate phosphoribosyltransferase (343 aa).

Residues Gly-84, 87–88 (GD), Thr-92, 94–97 (NIST), 112–120 (KHGNRSVSS), and Ser-124 each bind 5-phospho-alpha-D-ribose 1-diphosphate. Gly-84 contributes to the anthranilate binding site. Ser-96 serves as a coordination point for Mg(2+). Position 115 (Asn-115) interacts with anthranilate. Arg-170 is an anthranilate binding site. Mg(2+)-binding residues include Asp-229 and Glu-230.

The protein belongs to the anthranilate phosphoribosyltransferase family. Homodimer. It depends on Mg(2+) as a cofactor.

It carries out the reaction N-(5-phospho-beta-D-ribosyl)anthranilate + diphosphate = 5-phospho-alpha-D-ribose 1-diphosphate + anthranilate. It participates in amino-acid biosynthesis; L-tryptophan biosynthesis; L-tryptophan from chorismate: step 2/5. Functionally, catalyzes the transfer of the phosphoribosyl group of 5-phosphorylribose-1-pyrophosphate (PRPP) to anthranilate to yield N-(5'-phosphoribosyl)-anthranilate (PRA). The sequence is that of Anthranilate phosphoribosyltransferase from Stenotrophomonas maltophilia (strain K279a).